Reading from the N-terminus, the 963-residue chain is IQ motif and SEC7 domain-containing protein 1 (963 aa).

The disordered stretch occupies residues 21–88; the sequence is SGVEGEAPSS…TRRPKLQHST (68 aa). Residues 29–38 show a composition bias toward polar residues; the sequence is SSETGTSLDS. Phosphoserine occurs at positions 89, 105, and 107. The 30-residue stretch at 134 to 163 folds into the IQ domain; sequence TRHAARTIQTAFRQYQMNKNFERLRSSMSE. Phosphoserine occurs at positions 180, 249, and 253. 2 disordered regions span residues 312–332 and 349–513; these read LSPP…ESDL and KEDK…RNSW. 2 stretches are compositionally biased toward basic and acidic residues: residues 366–376 and 430–446; these read ERQEQRLRVEH and LPRE…RPLD. Residues 471–489 are compositionally biased toward low complexity; sequence DSINSTSNSNDTINCSSES. Phosphoserine occurs at positions 512 and 515. The 194-residue stretch at 517–710 folds into the SEC7 domain; that stretch reads AFSNDVIRKR…MGIYERIRKR (194 aa). The PH domain occupies 774 to 866; sequence HQREIFLFND…LRESIAEVQE (93 aa). Residues 848 to 879 are a coiled coil; the sequence is QDRKKFTDDLRESIAEVQEMEKHRIESELEKQ. The residue at position 892 (S892) is a Phosphoserine. Y911 is modified (phosphotyrosine). The disordered stretch occupies residues 922 to 947; it reads LSSSLRDLSEAGKRGRRSSAGSLESN. A phosphoserine mark is found at S924 and S925.

The protein belongs to the BRAG family. In terms of assembly, interacts with ARF1 and ARF6. Interacts with GRIA2; the interaction is required for ARF6 activation. Expressed in brain, ovary, heart, lung, liver, kidney and leukocytes. Moderate expression was also detected in lung, skeletal muscle, placenta, small intestine, pancreas, spleen and testis.

It localises to the cytoplasm. Its subcellular location is the nucleus. The protein resides in the postsynaptic density. It is found in the cytoplasmic vesicle. The protein localises to the secretory vesicle. It localises to the synaptic vesicle. In terms of biological role, guanine nucleotide exchange factor for ARF1 and ARF6. Guanine nucleotide exchange factor activity is enhanced by lipid binding. Accelerates GTP binding by ARFs of all three classes. Guanine nucleotide exchange protein for ARF6, mediating internalization of beta-1 integrin. Involved in neuronal development. In neurons, plays a role in the control of vesicle formation by endocytoc cargo. Upon long term depression, interacts with GRIA2 and mediates the activation of ARF6 to internalize synaptic AMPAR receptors. In Homo sapiens (Human), this protein is IQ motif and SEC7 domain-containing protein 1.